Consider the following 246-residue polypeptide: ATP synthase subunit a, chloroplastic (246 aa).

5 helical membrane passes run 33-53 (VHGQ…GFGL), 99-119 (TIFL…WALI), 133-153 (INTT…AGIN), 201-221 (GVLV…LGLF), and 222-242 (TSAI…GESL).

The protein belongs to the ATPase A chain family. F-type ATPases have 2 components, CF(1) - the catalytic core - and CF(0) - the membrane proton channel. CF(1) has five subunits: alpha(3), beta(3), gamma(1), delta(1), epsilon(1). CF(0) has four main subunits: a, b, b' and c.

The protein localises to the plastid. The protein resides in the chloroplast thylakoid membrane. Its function is as follows. Key component of the proton channel; it plays a direct role in the translocation of protons across the membrane. This chain is ATP synthase subunit a, chloroplastic, found in Oltmannsiellopsis viridis (Marine flagellate).